Here is a 248-residue protein sequence, read N- to C-terminus: Ubiquinone biosynthesis O-methyltransferase (248 aa).

Residues Arg-40, Gly-71, Asp-92, and Met-135 each contribute to the S-adenosyl-L-methionine site.

This sequence belongs to the methyltransferase superfamily. UbiG/COQ3 family.

It catalyses the reaction a 3-demethylubiquinol + S-adenosyl-L-methionine = a ubiquinol + S-adenosyl-L-homocysteine + H(+). It carries out the reaction a 3-(all-trans-polyprenyl)benzene-1,2-diol + S-adenosyl-L-methionine = a 2-methoxy-6-(all-trans-polyprenyl)phenol + S-adenosyl-L-homocysteine + H(+). It functions in the pathway cofactor biosynthesis; ubiquinone biosynthesis. Functionally, O-methyltransferase that catalyzes the 2 O-methylation steps in the ubiquinone biosynthetic pathway. The chain is Ubiquinone biosynthesis O-methyltransferase from Ruegeria pomeroyi (strain ATCC 700808 / DSM 15171 / DSS-3) (Silicibacter pomeroyi).